A 197-amino-acid chain; its full sequence is Na(+)-translocating NADH-quinone reductase subunit E (197 aa).

The next 6 helical transmembrane spans lie at 11-31 (SVFI…FLAV), 35-55 (VSTA…SVPA), 76-96 (FLKF…LEMF), 108-128 (LGIY…VSFM), 139-159 (VVYG…LAGI), and 175-195 (LGIT…FSGI).

Belongs to the NqrDE/RnfAE family. Composed of six subunits; NqrA, NqrB, NqrC, NqrD, NqrE and NqrF.

It localises to the cell inner membrane. The enzyme catalyses a ubiquinone + n Na(+)(in) + NADH + H(+) = a ubiquinol + n Na(+)(out) + NAD(+). Functionally, NQR complex catalyzes the reduction of ubiquinone-1 to ubiquinol by two successive reactions, coupled with the transport of Na(+) ions from the cytoplasm to the periplasm. NqrA to NqrE are probably involved in the second step, the conversion of ubisemiquinone to ubiquinol. The protein is Na(+)-translocating NADH-quinone reductase subunit E of Neisseria gonorrhoeae (strain ATCC 700825 / FA 1090).